Consider the following 566-residue polypeptide: 4-coumarate--CoA ligase-like 6 (566 aa).

The disordered stretch occupies residues 1-21 (MAATHLHIPPNPKTQTSHQNP). S212, S213, G214, T215, T216, and K220 together coordinate ATP. Y263 contacts (E)-4-coumaroyl-AMP. R284 is a CoA binding site. The interval 286 to 356 (DASDVVNVIE…QTLPHVDLIQ (71 aa)) is SBD1. Positions 334, 356, 357, and 361 each coordinate (E)-4-coumaroyl-AMP. Residues Q356, G357, T361, D442, and R457 each contribute to the ATP site. The segment at 357 to 421 (GYGMTESTAV…IQGPGVMKGY (65 aa)) is SBD2. K459 and K463 together coordinate (E)-4-coumaroyl-AMP. K465 and G466 together coordinate CoA. K548 provides a ligand contact to ATP. The short motif at 564–566 (SRL) is the Microbody targeting signal element.

This sequence belongs to the ATP-dependent AMP-binding enzyme family. Mg(2+) is required as a cofactor. Expressed at very low level in leaves.

It localises to the peroxisome. The enzyme catalyses (E)-4-coumarate + ATP + CoA = (E)-4-coumaroyl-CoA + AMP + diphosphate. It carries out the reaction (E)-4-coumarate + ATP + H(+) = (E)-4-coumaroyl-AMP + diphosphate. The catalysed reaction is (E)-4-coumaroyl-AMP + CoA = (E)-4-coumaroyl-CoA + AMP + H(+). It catalyses the reaction (E)-ferulate + ATP + CoA = (E)-feruloyl-CoA + AMP + diphosphate. The enzyme catalyses (E)-ferulate + ATP + H(+) = (E)-feruloyl-AMP + diphosphate. It carries out the reaction (E)-feruloyl-AMP + CoA = (E)-feruloyl-CoA + AMP + H(+). The catalysed reaction is (E)-caffeate + ATP + CoA = (E)-caffeoyl-CoA + AMP + diphosphate. It catalyses the reaction (E)-caffeate + ATP + H(+) = (E)-caffeoyl-AMP + diphosphate. The enzyme catalyses (E)-caffeoyl-AMP + CoA = (E)-caffeoyl-CoA + AMP + H(+). It carries out the reaction (E)-cinnamate + ATP + CoA = (E)-cinnamoyl-CoA + AMP + diphosphate. The catalysed reaction is 4-hydroxybenzoate + ATP + CoA = 4-hydroxybenzoyl-CoA + AMP + diphosphate. It catalyses the reaction tetradecanoate + ATP + CoA = tetradecanoyl-CoA + AMP + diphosphate. The enzyme catalyses hexanoate + ATP + CoA = hexanoyl-CoA + AMP + diphosphate. It carries out the reaction heptanoate + ATP + CoA = heptanoyl-CoA + AMP + diphosphate. Its function is as follows. Contributes to jasmonic acid biosynthesis by initiating the beta-oxidative chain shortening of its precursors. Acts as a carboxylate--CoA ligase that can use preferentially p-coumarate, ferulate and caffeate as substrates and, with a lower efficiency, (E)-cinnamate and 4-hydroxybenzoate as substrates. Involved in the biosynthesis of ubiquinone from phenylalanine by activating the propyl side chain of 4-coumarate, and possibly trans-cinnamate and 4-hydroxybenzoate, for subsequent beta-oxidative shortening and the formation of the benzenoid moiety of ubiquinone. Follows a two-step reaction mechanism, wherein the carboxylate substrate first undergoes adenylation by ATP, followed by a thioesterification in the presence of CoA to yield the final CoA thioester. This is 4-coumarate--CoA ligase-like 6 from Arabidopsis thaliana (Mouse-ear cress).